We begin with the raw amino-acid sequence, 325 residues long: DNA-directed RNA polymerase subunit alpha (325 aa).

The segment at 1–231 (MQNSLLKPRI…DQLNVFAALE (231 aa)) is alpha N-terminal domain (alpha-NTD). Positions 246–325 (VDPILLRPVD…ENWPPAGLEK (80 aa)) are alpha C-terminal domain (alpha-CTD).

Belongs to the RNA polymerase alpha chain family. In terms of assembly, homodimer. The RNAP catalytic core consists of 2 alpha, 1 beta, 1 beta' and 1 omega subunit. When a sigma factor is associated with the core the holoenzyme is formed, which can initiate transcription.

It catalyses the reaction RNA(n) + a ribonucleoside 5'-triphosphate = RNA(n+1) + diphosphate. In terms of biological role, DNA-dependent RNA polymerase catalyzes the transcription of DNA into RNA using the four ribonucleoside triphosphates as substrates. The chain is DNA-directed RNA polymerase subunit alpha from Janthinobacterium sp. (strain Marseille) (Minibacterium massiliensis).